Reading from the N-terminus, the 1577-residue chain is MEAGSVVRAIFDFCPSVSEELPLFVGDIIEVLAVVDEFWLLGKKEDVTGQFPSSFVEIVTIPSLKEGERLFVCICEFTSQELDNLPLHRGDLVILDGIPTAGWLQGRSCWGARGFFPSSCVRELCLSSQSRQWHSQSALFQIPEYSMGQARALMGLSAQLDEELDFREGDVITIIGVPEPGWFEGELEGRRGIFPEGFVELLGPLRTVDESVSSGNQDDCIVNGEVDTPVGEEEIGPDEDEEEPGTYGVALYRFQALEPNELDFEVGDKIRILATLEDGWLEGSLKGRTGIFPYRFVKLCPDTRVEETMALPQEGSLARIPETSLDCLENTLGVEEQRHETSDHEAEEPDCIISEAPTSPLGHLTSEYDTDRNSYQDEDTAGGPPRSPGVEWEMPLATDSPTSDPTEVVNGISSQPQVPFHPNLQKSQYYSTVGGSHPHSEQYPDLLPLEARTRDYASLPPKRMYSQLKTLQKPVLPLYRGSSVSASRVVKPRQSSPQLHNLASYTKKHHTSSVYSISERLEMKPGPQAQGLVMEAATHSQGDGSTDLDSKLTQQLIEFEKSLAGPGTEPDKILRHFSIMDFNSEKDIVRGSSKLITEQELPERRKALRPPPPRPCTPVSTSPHLLVDQNLKPAPPLVVRPSRPAPLPPSAQQRTNAVSPKLLSRHRPTCETLEKEGPGHMGRSLDQTSPCPLVLVRIEEMERDLDMYSRAQEELNLMLEEKQDESSRAETLEDLKFCESNIESLNMELQQLREMTLLSSQSSSLVAPSGSVSAENPEQRMLEKRAKVIEELLQTERDYIRDLEMCIERIMVPMQQAQVPNIDFEGLFGNMQMVIKVSKQLLAALEISDAVGPVFLGHRDELEGTYKIYCQNHDEAIALLEIYEKDEKIQKHLQDSLADLKSLYNEWGCTNYINLGSFLIKPVQRVMRYPLLLMELLNSTPESHPDKVPLTNAVLAVKEINVNINEYKRRKDLVLKYRKGDEDSLMEKISKLNIHSIIKKSNRVSSHLKHLTGFAPQIKDEVFEETEKNFRMQERLIKSFIRDLSLYLQHIRESACVKVVAAVSMWDVCMERGHRDLEQFERVHRYISDQLFTNFKERTERLVISPLNQLLSMFTGPHKLVQKRFDKLLDFYNCTERAEKLKDKKTLEELQSARNNYEALNAQLLDELPKFHQYAQGLFTNCVHGYAEAHCDFVHQALEQLKPLLSLLKVAGREGNLIAIFHEEHSRVLQQLQVFTFFPESLPATKKPFERKTIDRQSARKPLLGLPSYMLQSEELRASLLARYPPEKLFQAERNFNAAQDLDVSLLEGDLVGVIKKKDPMGSQNRWLIDNGVTKGFVYSSFLKPYNPRRSHSDASVGSHSSTESEHGSSSPRFPRQNSGSTLTFNPSSMAVSFTSGSCQKQPQDASPPPKECDQGTLSASLNPSNSESSPSRCPSDPDSTSQPRSGDSADVARDVKQPTATPRSYRNFRHPEIVGYSVPGRNGQSQDLVKGCARTAQAPEDRSTEPDGSEAEGNQVYFAVYTFKARNPNELSVSANQKLKILEFKDVTGNTEWWLAEVNGKKGYVPSNYIRKTEYT.

N-acetylmethionine is present on Met1. SH3 domains lie at 2-61 (EAGS…IVTI), 66-126 (EGER…ELCL), 145-204 (YSMG…LLGP), and 243-302 (EPGT…LCPD). 2 disordered regions span residues 211–244 (SVSS…EEEP) and 335–395 (EEQR…WEMP). Positions 230–244 (VGEEEIGPDEDEEEP) are enriched in acidic residues. The segment covering 335 to 344 (EEQRHETSDH) has biased composition (basic and acidic residues). Ser496 bears the Phosphoserine mark. 2 disordered regions span residues 591-624 (GSSK…TSPH) and 639-659 (VRPS…NAVS). Pro residues predominate over residues 639–649 (VRPSRPAPLPP). Position 684 is a phosphoserine (Ser684). Positions 693–757 (LVLVRIEEME…ELQQLREMTL (65 aa)) form a coiled coil. The DH domain maps to 784-967 (KRAKVIEELL…KEINVNINEY (184 aa)). A BAR domain is found at 1008-1217 (LKHLTGFAPQ…LKVAGREGNL (210 aa)). The stretch at 1136–1173 (ERAEKLKDKKTLEELQSARNNYEALNAQLLDELPKFHQ) forms a coiled coil. In terms of domain architecture, SH3 5 spans 1285–1348 (PPEKLFQAER…YSSFLKPYNP (64 aa)). Positions 1348–1487 (PRRSHSDASV…SVPGRNGQSQ (140 aa)) are disordered. A compositionally biased stretch (polar residues) spans 1376–1405 (RQNSGSTLTFNPSSMAVSFTSGSCQKQPQD). A compositionally biased stretch (low complexity) spans 1419–1442 (SASLNPSNSESSPSRCPSDPDSTS). The SH3 6 domain maps to 1513–1576 (EGNQVYFAVY…PSNYIRKTEY (64 aa)).

In terms of assembly, binds DNM1 via its N-terminal SH3 domains. The C-terminal SH3 domain binds a complex containing actin, tubulin, Hsp70 and actin-regulatory proteins, such as ENAH, EVL, WIRE, CR16, WAVE1 and NAP1L1. Interacts with FASLG. Interacts (via SH3 domain 6) with WASL. Interacts (via SH3 domain 6) interacts with ENAH. Interacts (via C-terminal domain) with TJP1; required for the apical cell-cell junction localization of DNMBP. (Microbial infection) Interacts (via SH3 domain 6) with L.monocytogenes InlC. In terms of tissue distribution, detected in heart, brain, lung, liver, skeletal muscle, kidney and pancreas.

The protein resides in the cytoplasm. It localises to the golgi apparatus. It is found in the golgi stack. Its subcellular location is the cytoskeleton. The protein localises to the synapse. The protein resides in the cell junction. Its function is as follows. Plays a critical role as a guanine nucleotide exchange factor (GEF) for CDC42 in several intracellular processes associated with the actin and microtubule cytoskeleton. Regulates the structure of apical junctions through F-actin organization in epithelial cells. Participates in the normal lumenogenesis of epithelial cell cysts by regulating spindle orientation. Plays a role in ciliogenesis. May play a role in membrane trafficking between the cell surface and the Golgi. This chain is Dynamin-binding protein, found in Homo sapiens (Human).